Reading from the N-terminus, the 613-residue chain is MPKYRSATTTHGRNMAGARALWRATGVKDEDFGKPIIAVVNSFTQFVPGHVHLKDLGQLVAQEIEAAGGIAKEFNTIAVDDGIAMGHGGMLYSLPSRELIADSVEYMVNAHCADAMVCISNCDKITPGMLMASMRLNIPVIFVSGGPMEAGKTKLSDQIIKLDLVDAMIQGADPKVSDEQSEQIERSACPTCGSCSGMFTANSMNCLTEALGLSQPGNGSLLATHADRKELFINAGKRIVELTKRYYEQDDETALPRNIATKAAFENAMALDIAMGGSTNTVLHLLAAAQEGEVDFDMTDIDRMSRQVPHLCKVAPSTQKYHMEDVHRAGGVVGILGELNRAGLLHNQSKTVLGLTWEEQLAKYDIMLTDSEEVKSFYRAGPAGIRTTQAFSQDCRWDTLDDDRAEGCIRTKENAFSQDGGLAVLKGNIALDGCIVKTAGVDESILKFTGPAVVFESQEDAVDGILGGKVKAGDVVVIRYEGPKGGPGMQEMLYPTTYLKSMGLGKECALLTDGRFSGGTSGLSIGHASPEAANGGAIGLVQDGDLIAIDIPNRSISLEISEQELAERRVKQDELGWKPANRQREVSFALKAYASMATSADKGAVRDKSKLEG.

Position 81 (Asp81) interacts with Mg(2+). A [2Fe-2S] cluster-binding site is contributed by Cys122. The Mg(2+) site is built by Asp123 and Lys124. Lys124 bears the N6-carboxylysine mark. Cys195 lines the [2Fe-2S] cluster pocket. Glu491 is a Mg(2+) binding site. The active-site Proton acceptor is Ser517.

It belongs to the IlvD/Edd family. As to quaternary structure, homodimer. Requires [2Fe-2S] cluster as cofactor. It depends on Mg(2+) as a cofactor.

It catalyses the reaction (2R)-2,3-dihydroxy-3-methylbutanoate = 3-methyl-2-oxobutanoate + H2O. The enzyme catalyses (2R,3R)-2,3-dihydroxy-3-methylpentanoate = (S)-3-methyl-2-oxopentanoate + H2O. It participates in amino-acid biosynthesis; L-isoleucine biosynthesis; L-isoleucine from 2-oxobutanoate: step 3/4. Its pathway is amino-acid biosynthesis; L-valine biosynthesis; L-valine from pyruvate: step 3/4. Its function is as follows. Functions in the biosynthesis of branched-chain amino acids. Catalyzes the dehydration of (2R,3R)-2,3-dihydroxy-3-methylpentanoate (2,3-dihydroxy-3-methylvalerate) into 2-oxo-3-methylpentanoate (2-oxo-3-methylvalerate) and of (2R)-2,3-dihydroxy-3-methylbutanoate (2,3-dihydroxyisovalerate) into 2-oxo-3-methylbutanoate (2-oxoisovalerate), the penultimate precursor to L-isoleucine and L-valine, respectively. The polypeptide is Dihydroxy-acid dehydratase (Vibrio parahaemolyticus serotype O3:K6 (strain RIMD 2210633)).